The sequence spans 360 residues: Peptide chain release factor 1 (360 aa).

Position 235 is an N5-methylglutamine (glutamine 235). Residues 284 to 295 (ERQEQAQADTRR) are compositionally biased toward basic and acidic residues. Positions 284–309 (ERQEQAQADTRRNLLGSGDRSDKIRT) are disordered.

The protein belongs to the prokaryotic/mitochondrial release factor family. In terms of processing, methylated by PrmC. Methylation increases the termination efficiency of RF1.

The protein localises to the cytoplasm. Peptide chain release factor 1 directs the termination of translation in response to the peptide chain termination codons UAG and UAA. The sequence is that of Peptide chain release factor 1 (prfA) from Pasteurella multocida (strain Pm70).